The sequence spans 290 residues: 4-hydroxy-tetrahydrodipicolinate synthase (290 aa).

Serine 44 is a pyruvate binding site. Catalysis depends on tyrosine 132, which acts as the Proton donor/acceptor. The active-site Schiff-base intermediate with substrate is the lysine 161. Position 202 (valine 202) interacts with pyruvate.

It belongs to the DapA family. As to quaternary structure, homotetramer; dimer of dimers.

The protein localises to the cytoplasm. It catalyses the reaction L-aspartate 4-semialdehyde + pyruvate = (2S,4S)-4-hydroxy-2,3,4,5-tetrahydrodipicolinate + H2O + H(+). It functions in the pathway amino-acid biosynthesis; L-lysine biosynthesis via DAP pathway; (S)-tetrahydrodipicolinate from L-aspartate: step 3/4. Functionally, catalyzes the condensation of (S)-aspartate-beta-semialdehyde [(S)-ASA] and pyruvate to 4-hydroxy-tetrahydrodipicolinate (HTPA). This Hydrogenobaculum sp. (strain Y04AAS1) protein is 4-hydroxy-tetrahydrodipicolinate synthase.